A 195-amino-acid polypeptide reads, in one-letter code: MSALVPIVIEQTNRGERAYDIYSRLLKDRIVILSGEITDDIASLIVAQLLFLEAEDPDKDIYLYINSPGGSVTAGFAIYDTIQYIKPDVSTICVGMAASMGAFLLAAGAKGKRFALPNSEIMIHQPIGGVRGQATDIKIHAEWILKIKQRINRILAERTGQPIEVIERDTERDFFMTAEEALKYGIIDKVIERRP.

Ser99 functions as the Nucleophile in the catalytic mechanism. His124 is an active-site residue.

This sequence belongs to the peptidase S14 family. In terms of assembly, fourteen ClpP subunits assemble into 2 heptameric rings which stack back to back to give a disk-like structure with a central cavity, resembling the structure of eukaryotic proteasomes.

It is found in the cytoplasm. The catalysed reaction is Hydrolysis of proteins to small peptides in the presence of ATP and magnesium. alpha-casein is the usual test substrate. In the absence of ATP, only oligopeptides shorter than five residues are hydrolyzed (such as succinyl-Leu-Tyr-|-NHMec, and Leu-Tyr-Leu-|-Tyr-Trp, in which cleavage of the -Tyr-|-Leu- and -Tyr-|-Trp bonds also occurs).. Functionally, cleaves peptides in various proteins in a process that requires ATP hydrolysis. Has a chymotrypsin-like activity. Plays a major role in the degradation of misfolded proteins. The chain is ATP-dependent Clp protease proteolytic subunit from Caldicellulosiruptor saccharolyticus (strain ATCC 43494 / DSM 8903 / Tp8T 6331).